The sequence spans 715 residues: Bromodomain-containing protein DDB_G0278469 (715 aa).

Disordered regions lie at residues 18-46 (EDNNNNNNNNNNKENINNDDNNINPNRNA) and 186-425 (QQQK…ETKQ). 5 stretches are compositionally biased toward low complexity: residues 20-45 (NNNNNNNNNNKENINNDDNNINPNRN), 186-204 (QQQKQQQQQQQQQQAPTAQ), 215-227 (LTAATTTPTTTTT), 234-254 (TAPPTTVASSSTIPKTTTTKK), and 261-281 (SKSNLKSSQNKLSTTTTTTIT). A compositionally biased stretch (basic and acidic residues) spans 307–316 (KPKEQKKDIM). Positions 322–368 (SKKANTHEEKEEGESEEEEEEEEEEEEEEEEEEEEEQLEDKQKQTKT) form a coiled coil. The span at 332–359 (EEGESEEEEEEEEEEEEEEEEEEEEEQL) shows a compositional bias: acidic residues. Polar residues predominate over residues 366 to 389 (TKTPISQNKSASSNIKPLSKTSKS). Low complexity predominate over residues 405 to 414 (KKITSTTVTR). A coiled-coil region spans residues 437–470 (KQQTQEEIEQELKLESIRKRIEQFINKFEKEIND). Residues 474 to 599 (KDLDEGKRKI…IQFYKSLLET (126 aa)) enclose the Bromo domain. Residues 653-715 (LVDEDEDECL…SEEEDQEATN (63 aa)) form a disordered region. Polar residues predominate over residues 662–672 (LNNQNNPTTYD). Over residues 684–715 (QESDEESDEESDEESDEERDQLSEEEDQEATN) the composition is skewed to acidic residues.

The chain is Bromodomain-containing protein DDB_G0278469 from Dictyostelium discoideum (Social amoeba).